The sequence spans 234 residues: Fibrillarin-like rRNA/tRNA 2'-O-methyltransferase (234 aa).

S-adenosyl-L-methionine is bound by residues 90–91, 109–110, 134–135, and 154–157; these read TT, EF, DA, and DIAQ.

It belongs to the methyltransferase superfamily. Fibrillarin family. Interacts with nop5. Component of box C/D small ribonucleoprotein (sRNP) particles that contain rpl7ae, FlpA and nop5, plus a guide RNA.

Involved in pre-rRNA and tRNA processing. Utilizes the methyl donor S-adenosyl-L-methionine to catalyze the site-specific 2'-hydroxyl methylation of ribose moieties in rRNA and tRNA. Site specificity is provided by a guide RNA that base pairs with the substrate. Methylation occurs at a characteristic distance from the sequence involved in base pairing with the guide RNA. The sequence is that of Fibrillarin-like rRNA/tRNA 2'-O-methyltransferase from Staphylothermus marinus (strain ATCC 43588 / DSM 3639 / JCM 9404 / F1).